The following is a 287-amino-acid chain: ATP synthase gamma chain (287 aa).

This sequence belongs to the ATPase gamma chain family. F-type ATPases have 2 components, CF(1) - the catalytic core - and CF(0) - the membrane proton channel. CF(1) has five subunits: alpha(3), beta(3), gamma(1), delta(1), epsilon(1). CF(0) has three main subunits: a, b and c.

It localises to the cell inner membrane. Its function is as follows. Produces ATP from ADP in the presence of a proton gradient across the membrane. The gamma chain is believed to be important in regulating ATPase activity and the flow of protons through the CF(0) complex. This chain is ATP synthase gamma chain, found in Ectopseudomonas mendocina (strain ymp) (Pseudomonas mendocina).